Reading from the N-terminus, the 352-residue chain is S-adenosylmethionine:tRNA ribosyltransferase-isomerase (352 aa).

The protein belongs to the QueA family. In terms of assembly, monomer.

It is found in the cytoplasm. The enzyme catalyses 7-aminomethyl-7-carbaguanosine(34) in tRNA + S-adenosyl-L-methionine = epoxyqueuosine(34) in tRNA + adenine + L-methionine + 2 H(+). The protein operates within tRNA modification; tRNA-queuosine biosynthesis. Its function is as follows. Transfers and isomerizes the ribose moiety from AdoMet to the 7-aminomethyl group of 7-deazaguanine (preQ1-tRNA) to give epoxyqueuosine (oQ-tRNA). The sequence is that of S-adenosylmethionine:tRNA ribosyltransferase-isomerase from Dechloromonas aromatica (strain RCB).